A 296-amino-acid chain; its full sequence is NADH-cytochrome b5 reductase 2-A (296 aa).

The helical transmembrane segment at 15 to 35 threads the bilayer; the sequence is FVIGAPTIALCSYYYSSGAFL. An FAD-binding FR-type domain is found at 47–151; the sequence is NNWIDLPISR…KGPIPKWKWV (105 aa). 154–189 contacts FAD; sequence SFESITLIGGGTGITPLYQLIHAITKNPNDKTKIRL.

This sequence belongs to the flavoprotein pyridine nucleotide cytochrome reductase family. FAD is required as a cofactor.

The protein localises to the mitochondrion outer membrane. The catalysed reaction is 2 Fe(III)-[cytochrome b5] + NADH = 2 Fe(II)-[cytochrome b5] + NAD(+) + H(+). In terms of biological role, may mediate the reduction of outer membrane cytochrome b5. The chain is NADH-cytochrome b5 reductase 2-A (MCR1A) from Vanderwaltozyma polyspora (strain ATCC 22028 / DSM 70294 / BCRC 21397 / CBS 2163 / NBRC 10782 / NRRL Y-8283 / UCD 57-17) (Kluyveromyces polysporus).